The primary structure comprises 379 residues: Succinyl-diaminopimelate desuccinylase (379 aa).

H70 is a Zn(2+) binding site. Residue D72 is part of the active site. D103 provides a ligand contact to Zn(2+). The active-site Proton acceptor is the E137. Residues E138, E166, and H352 each coordinate Zn(2+).

It belongs to the peptidase M20A family. DapE subfamily. Homodimer. Requires Zn(2+) as cofactor. Co(2+) serves as cofactor.

It carries out the reaction N-succinyl-(2S,6S)-2,6-diaminopimelate + H2O = (2S,6S)-2,6-diaminopimelate + succinate. The protein operates within amino-acid biosynthesis; L-lysine biosynthesis via DAP pathway; LL-2,6-diaminopimelate from (S)-tetrahydrodipicolinate (succinylase route): step 3/3. In terms of biological role, catalyzes the hydrolysis of N-succinyl-L,L-diaminopimelic acid (SDAP), forming succinate and LL-2,6-diaminopimelate (DAP), an intermediate involved in the bacterial biosynthesis of lysine and meso-diaminopimelic acid, an essential component of bacterial cell walls. The sequence is that of Succinyl-diaminopimelate desuccinylase from Shewanella baltica (strain OS155 / ATCC BAA-1091).